The primary structure comprises 274 residues: Orotidine 5'-phosphate decarboxylase (274 aa).

Substrate-binding positions include aspartate 40, 62–64, 93–102, tyrosine 227, and arginine 245; these read KTH and DRKFIDIGNT. Lysine 95 serves as the catalytic Proton donor.

It belongs to the OMP decarboxylase family.

It carries out the reaction orotidine 5'-phosphate + H(+) = UMP + CO2. Its pathway is pyrimidine metabolism; UMP biosynthesis via de novo pathway; UMP from orotate: step 2/2. This Emericella nidulans (strain FGSC A4 / ATCC 38163 / CBS 112.46 / NRRL 194 / M139) (Aspergillus nidulans) protein is Orotidine 5'-phosphate decarboxylase (pyrG).